Reading from the N-terminus, the 309-residue chain is Protein FdhE (309 aa).

The protein belongs to the FdhE family.

The protein resides in the cytoplasm. Functionally, necessary for formate dehydrogenase activity. The polypeptide is Protein FdhE (Salmonella arizonae (strain ATCC BAA-731 / CDC346-86 / RSK2980)).